Reading from the N-terminus, the 256-residue chain is Probable ABC transporter ATP-binding protein SPy_0285/M5005_Spy0242 (256 aa).

In terms of domain architecture, ABC transporter spans 4–246 (LEINNLHVSI…EKEGYAGIAQ (243 aa)). Position 36 to 43 (36 to 43 (GPNGTGKS)) interacts with ATP.

Belongs to the ABC transporter superfamily. Ycf16 family.

It localises to the cell membrane. The polypeptide is Probable ABC transporter ATP-binding protein SPy_0285/M5005_Spy0242 (Streptococcus pyogenes serotype M1).